The sequence spans 204 residues: NAD(P)H-quinone oxidoreductase subunit M, chloroplastic (204 aa).

A chloroplast-targeting transit peptide spans 1-27 (MASTSMSLTRACKVHAVLACSIPSVSS).

It belongs to the NDH complex subunit M family. As to quaternary structure, part of the chloroplast NDH complex, composed of a mixture of chloroplast and nucleus encoded subunits. Component of the NDH subcomplex A, at least composed of ndhH, ndhI, ndhJ, ndhK, ndhL, ndhM, ndhN and ndhO.

It is found in the plastid. The protein localises to the chloroplast thylakoid membrane. It carries out the reaction a plastoquinone + NADH + (n+1) H(+)(in) = a plastoquinol + NAD(+) + n H(+)(out). It catalyses the reaction a plastoquinone + NADPH + (n+1) H(+)(in) = a plastoquinol + NADP(+) + n H(+)(out). In terms of biological role, NDH shuttles electrons from NAD(P)H:plastoquinone, via FMN and iron-sulfur (Fe-S) centers, to quinones in the photosynthetic chain and possibly in a chloroplast respiratory chain. The immediate electron acceptor for the enzyme in this species is believed to be plastoquinone. Couples the redox reaction to proton translocation, and thus conserves the redox energy in a proton gradient. The polypeptide is NAD(P)H-quinone oxidoreductase subunit M, chloroplastic (Physcomitrium patens (Spreading-leaved earth moss)).